The following is a 131-amino-acid chain: L-aspartate semialdehyde sulfurtransferase iron-sulfur subunit (131 aa).

4Fe-4S ferredoxin-type domains lie at 73-102 (KVIK…MDED) and 103-131 (YNVV…EIFE). [4Fe-4S] cluster is bound by residues Cys-82, Cys-85, Cys-88, Cys-92, Cys-112, Cys-115, Cys-118, and Cys-122.

As to quaternary structure, may form a complex with MJ0100. The cofactor is [4Fe-4S] cluster.

It functions in the pathway amino-acid biosynthesis. Required for O-acetylhomoserine sulfhydrylase (OAHS)-independent homocysteine (Hcy) biosynthesis. Together with MJ0100, catalyzes the condensation of sulfide with aspartate semialdehyde to generate homocysteine. May be involved in the reduction of the disulfide formed in MJ0100. This chain is L-aspartate semialdehyde sulfurtransferase iron-sulfur subunit, found in Methanocaldococcus jannaschii (strain ATCC 43067 / DSM 2661 / JAL-1 / JCM 10045 / NBRC 100440) (Methanococcus jannaschii).